Reading from the N-terminus, the 131-residue chain is UPF0102 protein Ent638_3585 (131 aa).

A disordered region spans residues 1-20 (MAQIPAGADRPGKLSRKQTG).

Belongs to the UPF0102 family.

The sequence is that of UPF0102 protein Ent638_3585 from Enterobacter sp. (strain 638).